Consider the following 103-residue polypeptide: uncharacterized protein (103 aa).

Residues 37 to 57 (FILLSSLLIGGLLITIACYHI) form a helical membrane-spanning segment.

The protein resides in the membrane. This is an uncharacterized protein from Saccharomyces cerevisiae (strain ATCC 204508 / S288c) (Baker's yeast).